A 149-amino-acid polypeptide reads, in one-letter code: Transcriptional repressor NrdR (149 aa).

A zinc finger lies at 3–34; sequence CPFCSATDTKVIDSRLVADGHQVRRRRECTEC. In terms of domain architecture, ATP-cone spans 49–139; it reads PRVIKRDGTR…VYRAFEDVSQ (91 aa).

The protein belongs to the NrdR family. Zn(2+) serves as cofactor.

Negatively regulates transcription of bacterial ribonucleotide reductase nrd genes and operons by binding to NrdR-boxes. In Shewanella frigidimarina (strain NCIMB 400), this protein is Transcriptional repressor NrdR.